A 364-amino-acid chain; its full sequence is Selenide, water dikinase (364 aa).

U25 is a catalytic residue. Residue U25 is a non-standard amino acid, selenocysteine. Residues K28, 46–48, D66, D89, and 141–143 contribute to the ATP site; these read GYD and GQT. Position 48 (D48) interacts with Mg(2+). D89 contributes to the Mg(2+) binding site. D244 contacts Mg(2+).

This sequence belongs to the selenophosphate synthase 1 family. Class II subfamily. As to quaternary structure, homodimer. Mg(2+) is required as a cofactor.

It carries out the reaction hydrogenselenide + ATP + H2O = selenophosphate + AMP + phosphate + 2 H(+). Functionally, synthesizes selenophosphate from selenide and ATP. The chain is Selenide, water dikinase (selD) from Dictyostelium discoideum (Social amoeba).